The chain runs to 346 residues: Holliday junction branch migration complex subunit RuvB (346 aa).

Residues M1 to Y181 form a large ATPase domain (RuvB-L) region. ATP contacts are provided by residues L20, R21, G62, K65, T66, T67, E128–F130, R171, Y181, and R218. T66 serves as a coordination point for Mg(2+). A small ATPAse domain (RuvB-S) region spans residues T182–E252. Residues N255–E346 are head domain (RuvB-H). DNA contacts are provided by R291, R310, and R315.

This sequence belongs to the RuvB family. Homohexamer. Forms an RuvA(8)-RuvB(12)-Holliday junction (HJ) complex. HJ DNA is sandwiched between 2 RuvA tetramers; dsDNA enters through RuvA and exits via RuvB. An RuvB hexamer assembles on each DNA strand where it exits the tetramer. Each RuvB hexamer is contacted by two RuvA subunits (via domain III) on 2 adjacent RuvB subunits; this complex drives branch migration. In the full resolvosome a probable DNA-RuvA(4)-RuvB(12)-RuvC(2) complex forms which resolves the HJ.

Its subcellular location is the cytoplasm. The enzyme catalyses ATP + H2O = ADP + phosphate + H(+). Its function is as follows. The RuvA-RuvB-RuvC complex processes Holliday junction (HJ) DNA during genetic recombination and DNA repair, while the RuvA-RuvB complex plays an important role in the rescue of blocked DNA replication forks via replication fork reversal (RFR). RuvA specifically binds to HJ cruciform DNA, conferring on it an open structure. The RuvB hexamer acts as an ATP-dependent pump, pulling dsDNA into and through the RuvAB complex. RuvB forms 2 homohexamers on either side of HJ DNA bound by 1 or 2 RuvA tetramers; 4 subunits per hexamer contact DNA at a time. Coordinated motions by a converter formed by DNA-disengaged RuvB subunits stimulates ATP hydrolysis and nucleotide exchange. Immobilization of the converter enables RuvB to convert the ATP-contained energy into a lever motion, pulling 2 nucleotides of DNA out of the RuvA tetramer per ATP hydrolyzed, thus driving DNA branch migration. The RuvB motors rotate together with the DNA substrate, which together with the progressing nucleotide cycle form the mechanistic basis for DNA recombination by continuous HJ branch migration. Branch migration allows RuvC to scan DNA until it finds its consensus sequence, where it cleaves and resolves cruciform DNA. The protein is Holliday junction branch migration complex subunit RuvB of Brucella melitensis biotype 2 (strain ATCC 23457).